The following is a 520-amino-acid chain: GMP synthase [glutamine-hydrolyzing] (520 aa).

The Glutamine amidotransferase type-1 domain occupies 9–202; that stretch reads TVLIVDFGSQ…VHNIAGIEGD (194 aa). The Nucleophile role is filled by cysteine 86. Catalysis depends on residues histidine 176 and glutamate 178. The region spanning 203–395 is the GMPS ATP-PPase domain; it reads WTMRAYREHA…LGLPESFIGR (193 aa). 230 to 236 serves as a coordination point for ATP; it reads SGGVDSS.

Homodimer.

The catalysed reaction is XMP + L-glutamine + ATP + H2O = GMP + L-glutamate + AMP + diphosphate + 2 H(+). It functions in the pathway purine metabolism; GMP biosynthesis; GMP from XMP (L-Gln route): step 1/1. Its function is as follows. Catalyzes the synthesis of GMP from XMP. This Mesorhizobium japonicum (strain LMG 29417 / CECT 9101 / MAFF 303099) (Mesorhizobium loti (strain MAFF 303099)) protein is GMP synthase [glutamine-hydrolyzing].